The chain runs to 171 residues: Protein phosphatase 1 regulatory subunit 1A (171 aa).

M1 carries the post-translational modification N-acetylmethionine. The segment at 1-171 (MEQDNSPRKI…PLDSKGANSV (171 aa)) is disordered. The interval 9–12 (KIQF) is essential for activity. Residues 19 to 29 (PHLDPEAAEQI) are compositionally biased toward basic and acidic residues. T35 is modified (phosphothreonine; by PKA). The segment at 42–54 (TSDQSSPEIDEDR) is essential for activity. A phosphoserine mark is found at S43, S46, S47, and S67. Positions 135–157 (KTAECIPKTHERGSKEPSTKEPS) are enriched in basic and acidic residues. Residues 143–171 (THERGSKEPSTKEPSTHIPPLDSKGANSV) are interaction with PPP1R15A.

The protein belongs to the protein phosphatase inhibitor 1 family. Interacts with PPP1R15A. In terms of processing, phosphorylation of Thr-35 is required for activity.

Its function is as follows. Inhibitor of protein-phosphatase 1. This protein may be important in hormonal control of glycogen metabolism. Hormones that elevate intracellular cAMP increase I-1 activity in many tissues. I-1 activation may impose cAMP control over proteins that are not directly phosphorylated by PKA. Following a rise in intracellular calcium, I-1 is inactivated by calcineurin (or PP2B). Does not inhibit type-2 phosphatases. The sequence is that of Protein phosphatase 1 regulatory subunit 1A (PPP1R1A) from Homo sapiens (Human).